A 298-amino-acid polypeptide reads, in one-letter code: Tyrosine recombinase XerC (298 aa).

The Core-binding (CB) domain maps to 1 to 84 (MNHIQEAFLN…TLRTFYEYWM (84 aa)). One can recognise a Tyr recombinase domain in the interval 105–286 (YLPQFFYEEE…SNQQLRKVYL (182 aa)). Catalysis depends on residues Arg145, Lys169, His238, Arg241, and His264. The O-(3'-phospho-DNA)-tyrosine intermediate role is filled by Tyr273.

It belongs to the 'phage' integrase family. XerC subfamily. Forms a cyclic heterotetrameric complex composed of two molecules of XerC and two molecules of XerD.

The protein localises to the cytoplasm. Site-specific tyrosine recombinase, which acts by catalyzing the cutting and rejoining of the recombining DNA molecules. The XerC-XerD complex is essential to convert dimers of the bacterial chromosome into monomers to permit their segregation at cell division. It also contributes to the segregational stability of plasmids. The chain is Tyrosine recombinase XerC from Staphylococcus aureus (strain MSSA476).